Reading from the N-terminus, the 122-residue chain is MSLAMTAFRMMAVALVVVVASSTTWARSLEGSSSPVTSLTRGRSLNKRAAFDPSCTGVYDRELLGRLSRLCDDCYNVFREPKVAMECRSNCFFNPAFVQCLEYLIPAELHEEYQALVQTVGK.

Residues 1–26 (MSLAMTAFRMMAVALVVVVASSTTWA) form the signal peptide. 3 disulfide bridges follow: Cys55/Cys91, Cys71/Cys87, and Cys74/Cys100. A Valine amide modification is found at Val120.

It belongs to the arthropod CHH/MIH/GIH/VIH hormone family. As to expression, produced by the medulla terminalis X-organ in the eyestalks and transported to the sinus gland where they are stored and released.

Its subcellular location is the secreted. Functionally, hormone found in the sinus gland of isopods and decapods which controls the blood sugar level. Has a secretagogue action over the amylase released from the midgut gland. May act as a stress hormone and may be involved in the control of molting and reproduction. The protein is Crustacean hyperglycemic hormones 7 of Penaeus japonicus (Kuruma prawn).